A 91-amino-acid polypeptide reads, in one-letter code: CLAVATA3/ESR (CLE)-related protein 27 (91 aa).

An N-terminal signal peptide occupies residues 1-35 (MTHAREWRSSLTTTLLMVILLSYMLHLFCVYSRVG). A hydroxyproline mark is found at Pro-83 and Pro-86. A glycan (O-linked (Ara...) hydroxyproline) is linked at Pro-86.

It belongs to the CLV3/ESR signal peptide family. In terms of processing, the O-glycosylation (arabinosylation) of the hydroxyproline Pro-86 enhances binding affinity of the CLE27p peptide for its receptor. In terms of tissue distribution, mostly expressed in apex, and, to a lower extent, in roots, leaves, flowers and siliques.

It is found in the secreted. The protein resides in the extracellular space. Its function is as follows. Extracellular signal peptide that regulates cell fate. Represses root apical meristem maintenance. The chain is CLAVATA3/ESR (CLE)-related protein 27 from Arabidopsis thaliana (Mouse-ear cress).